Here is a 148-residue protein sequence, read N- to C-terminus: D-aminoacyl-tRNA deacylase (148 aa).

Residues Gly137 to Pro138 carry the Gly-cisPro motif, important for rejection of L-amino acids motif.

The protein belongs to the DTD family. As to quaternary structure, homodimer.

Its subcellular location is the cytoplasm. It carries out the reaction glycyl-tRNA(Ala) + H2O = tRNA(Ala) + glycine + H(+). The enzyme catalyses a D-aminoacyl-tRNA + H2O = a tRNA + a D-alpha-amino acid + H(+). In terms of biological role, an aminoacyl-tRNA editing enzyme that deacylates mischarged D-aminoacyl-tRNAs. Also deacylates mischarged glycyl-tRNA(Ala), protecting cells against glycine mischarging by AlaRS. Acts via tRNA-based rather than protein-based catalysis; rejects L-amino acids rather than detecting D-amino acids in the active site. By recycling D-aminoacyl-tRNA to D-amino acids and free tRNA molecules, this enzyme counteracts the toxicity associated with the formation of D-aminoacyl-tRNA entities in vivo and helps enforce protein L-homochirality. The sequence is that of D-aminoacyl-tRNA deacylase from Aquifex aeolicus (strain VF5).